A 266-amino-acid chain; its full sequence is Probable matrix protein (266 aa).

The disordered stretch occupies residues 158–177; sequence ACSAGTGGTEEGDSDTEEEP. The span at 167-177 shows a compositional bias: acidic residues; sequence EEGDSDTEEEP.

The protein resides in the virion. Its function is as follows. May play a role in virion budding and release by binding the ribonucleocapsid and the host membrane. This Ixodidae (hardbacked ticks) protein is Probable matrix protein.